The primary structure comprises 255 residues: tRNA (guanine-N(1)-)-methyltransferase (255 aa).

S-adenosyl-L-methionine-binding positions include Gly117 and 137–142; that span reads LGDFVL.

The protein belongs to the RNA methyltransferase TrmD family. As to quaternary structure, homodimer.

Its subcellular location is the cytoplasm. It carries out the reaction guanosine(37) in tRNA + S-adenosyl-L-methionine = N(1)-methylguanosine(37) in tRNA + S-adenosyl-L-homocysteine + H(+). Its function is as follows. Specifically methylates guanosine-37 in various tRNAs. The protein is tRNA (guanine-N(1)-)-methyltransferase of Paraburkholderia phytofirmans (strain DSM 17436 / LMG 22146 / PsJN) (Burkholderia phytofirmans).